Here is a 335-residue protein sequence, read N- to C-terminus: Fructose-1,6-bisphosphatase class 1 (335 aa).

Positions 92, 114, 116, and 117 each coordinate Mg(2+). Residues 117-120, N209, and K275 each bind substrate; that span reads DGSS. E281 is a binding site for Mg(2+).

This sequence belongs to the FBPase class 1 family. As to quaternary structure, homotetramer. Mg(2+) serves as cofactor.

It localises to the cytoplasm. It catalyses the reaction beta-D-fructose 1,6-bisphosphate + H2O = beta-D-fructose 6-phosphate + phosphate. It participates in carbohydrate biosynthesis; gluconeogenesis. In Paracidovorax citrulli (strain AAC00-1) (Acidovorax citrulli), this protein is Fructose-1,6-bisphosphatase class 1.